A 319-amino-acid chain; its full sequence is MAAKGGTVKAASGFNAAEDAQTLRKAMKGLGTDEDAIINVLAYRSTAQRQEIRTAYKTTIGRDLMDDLKSELSGNFEQVILGMMTPTVLYDVQELRKAMKGAGTDEGCLIEILASRTPEEIRRINQTYQLQYGRSLEDDIRSDTSFMFQRVLVSLSAGGRDESNYLDDALMRQDAQDLYEAGEKKWGTDEVKFLTVLCSRNRNHLLHVFDEYKRIAQKDIEQSIKSETSGSFEDALLAIVKCMRNKSAYFAERLYKSMKGLGTDDDTLIRVMVSRAEIDMLDIRANFKRLYGKSLYSFIKGDTSGDYRKVLLILCGGDD.

Alanine 2 carries the N-acetylalanine modification. The residue at position 7 (threonine 7) is a Phosphothreonine. Serine 12 is modified (phosphoserine). Annexin repeat units lie at residues phenylalanine 14–threonine 85, proline 86–alanine 157, alanine 169–lysine 241, and asparagine 245–glycine 316. Residues lysine 213, lysine 293, and lysine 300 each carry the N6-acetyllysine modification.

It belongs to the annexin family. In terms of assembly, monomer. Binds to SFTPA1 in a Ca(2+)-dependent manner.

The protein resides in the zymogen granule membrane. In terms of biological role, may play a role in alveolar type II cells through interaction with the surfactant protein SFTPA1 (SP-A). This chain is Annexin A4 (ANXA4), found in Bos taurus (Bovine).